We begin with the raw amino-acid sequence, 247 residues long: Small ribosomal subunit protein uS2 (247 aa).

Belongs to the universal ribosomal protein uS2 family.

The chain is Small ribosomal subunit protein uS2 from Halorhodospira halophila (strain DSM 244 / SL1) (Ectothiorhodospira halophila (strain DSM 244 / SL1)).